The following is a 1383-amino-acid chain: DNA-directed RNA polymerase subunit beta (1383 aa).

This sequence belongs to the RNA polymerase beta chain family. As to quaternary structure, the RNAP catalytic core consists of 2 alpha, 1 beta, 1 beta' and 1 omega subunit. When a sigma factor is associated with the core the holoenzyme is formed, which can initiate transcription.

The catalysed reaction is RNA(n) + a ribonucleoside 5'-triphosphate = RNA(n+1) + diphosphate. Its function is as follows. DNA-dependent RNA polymerase catalyzes the transcription of DNA into RNA using the four ribonucleoside triphosphates as substrates. This is DNA-directed RNA polymerase subunit beta from Anaplasma phagocytophilum (strain HZ).